Here is a 182-residue protein sequence, read N- to C-terminus: ATP synthase subunit b, chloroplastic (182 aa).

A helical transmembrane segment spans residues 33-55 (VLNIMLLLFGLIYVLKQFLGSLL).

This sequence belongs to the ATPase B chain family. As to quaternary structure, F-type ATPases have 2 components, F(1) - the catalytic core - and F(0) - the membrane proton channel. F(1) has five subunits: alpha(3), beta(3), gamma(1), delta(1), epsilon(1). F(0) has four main subunits: a(1), b(1), b'(1) and c(10-14). The alpha and beta chains form an alternating ring which encloses part of the gamma chain. F(1) is attached to F(0) by a central stalk formed by the gamma and epsilon chains, while a peripheral stalk is formed by the delta, b and b' chains.

It is found in the plastid. The protein localises to the chloroplast thylakoid membrane. F(1)F(0) ATP synthase produces ATP from ADP in the presence of a proton or sodium gradient. F-type ATPases consist of two structural domains, F(1) containing the extramembraneous catalytic core and F(0) containing the membrane proton channel, linked together by a central stalk and a peripheral stalk. During catalysis, ATP synthesis in the catalytic domain of F(1) is coupled via a rotary mechanism of the central stalk subunits to proton translocation. In terms of biological role, component of the F(0) channel, it forms part of the peripheral stalk, linking F(1) to F(0). The protein is ATP synthase subunit b, chloroplastic of Antithamnion sp. (Red alga).